Consider the following 619-residue polypeptide: Glucokinase regulatory protein (619 aa).

SIS domains lie at 90 to 283 and 319 to 498; these read VQEV…AESN and TATS…LRGK. 107–109 contacts keto-D-fructose 6-phosphate; the sequence is CGT. Residues 109–110, glutamate 153, 179–181, and glutamate 347 each bind beta-D-fructose 1-phosphate; these read TS and SCG. Residues 179 to 183 and glutamate 347 contribute to the keto-D-fructose 6-phosphate site; that span reads SCGLS. The segment at 462–464 is essential for interaction with GCK; sequence ILF. Lysine 513 is a keto-D-fructose 6-phosphate binding site. A beta-D-fructose 1-phosphate-binding site is contributed by lysine 513.

The protein belongs to the GCKR family. In terms of assembly, interacts (fructose 6-phosphate bound form) with gck.

Its subcellular location is the nucleus. The protein localises to the cytoplasm. The protein resides in the mitochondrion. Its function is as follows. Regulates glucokinase (gck) by forming an inactive complex with this enzyme. The affinity of gckr for gck is modulated by fructose metabolites: gckr with bound fructose 6-phosphate has increased affinity for gck, while gckr with bound fructose 1-phosphate has strongly decreased affinity for gck and does not inhibit gck activity. The chain is Glucokinase regulatory protein from Xenopus laevis (African clawed frog).